We begin with the raw amino-acid sequence, 432 residues long: 3-phosphoshikimate 1-carboxyvinyltransferase (432 aa).

3 residues coordinate 3-phosphoshikimate: K22, S23, and R27. K22 is a phosphoenolpyruvate binding site. The phosphoenolpyruvate site is built by G96 and R127. 3-phosphoshikimate contacts are provided by S173, S174, Q175, S201, D316, N339, and K343. Q175 provides a ligand contact to phosphoenolpyruvate. The active-site Proton acceptor is the D316. Residues R347, R391, and K416 each contribute to the phosphoenolpyruvate site.

Belongs to the EPSP synthase family. As to quaternary structure, monomer.

The protein localises to the cytoplasm. The enzyme catalyses 3-phosphoshikimate + phosphoenolpyruvate = 5-O-(1-carboxyvinyl)-3-phosphoshikimate + phosphate. It participates in metabolic intermediate biosynthesis; chorismate biosynthesis; chorismate from D-erythrose 4-phosphate and phosphoenolpyruvate: step 6/7. Catalyzes the transfer of the enolpyruvyl moiety of phosphoenolpyruvate (PEP) to the 5-hydroxyl of shikimate-3-phosphate (S3P) to produce enolpyruvyl shikimate-3-phosphate and inorganic phosphate. This Histophilus somni (strain 2336) (Haemophilus somnus) protein is 3-phosphoshikimate 1-carboxyvinyltransferase.